The following is a 689-amino-acid chain: Elongation factor G (689 aa).

The tr-type G domain occupies 8 to 282 (ENTRNLGIMA…AVVDYLPSPL (275 aa)). GTP-binding positions include 17–24 (AHIDAGKT), 81–85 (DTPGH), and 135–138 (NKMD).

The protein belongs to the TRAFAC class translation factor GTPase superfamily. Classic translation factor GTPase family. EF-G/EF-2 subfamily.

Its subcellular location is the cytoplasm. In terms of biological role, catalyzes the GTP-dependent ribosomal translocation step during translation elongation. During this step, the ribosome changes from the pre-translocational (PRE) to the post-translocational (POST) state as the newly formed A-site-bound peptidyl-tRNA and P-site-bound deacylated tRNA move to the P and E sites, respectively. Catalyzes the coordinated movement of the two tRNA molecules, the mRNA and conformational changes in the ribosome. The chain is Elongation factor G from Mesoplasma florum (strain ATCC 33453 / NBRC 100688 / NCTC 11704 / L1) (Acholeplasma florum).